We begin with the raw amino-acid sequence, 218 residues long: MDKSESTSVGRNRRRRPRRGSRSAPSSADANFRVLSQQLSRLNKTLAAGRPTINHPTFVGSERCRPGYTFTSITLKPPKIDRGSYYGKRLLLPDSVTEYDKKLVSRIQIRVNPLRKFDSTVWVTVRKVPASSDLSVAAISAMFADGASPVLVYQYAASGVQANNKLLYDLLAMRADIGDMRKYAVLVYSKDDALETDELVLHVDIEHQRIPTSGVLPV.

At methionine 1 the chain carries N-acetylmethionine; by host. Residues 1–28 (MDKSESTSVGRNRRRRPRRGSRSAPSSA) are disordered. Residues 11–21 (RNRRRRPRRGS) show a composition bias toward basic residues.

This sequence belongs to the cucumovirus capsid protein family.

The protein resides in the virion. Functionally, capsid protein. Probably binds RNA and plays a role in packaging. This chain is Capsid protein, found in Cucumber mosaic virus (strain E5) (CMV).